The chain runs to 270 residues: tRNA pseudouridine synthase A (270 aa).

D52 acts as the Nucleophile in catalysis. Y110 is a substrate binding site.

This sequence belongs to the tRNA pseudouridine synthase TruA family. Homodimer.

The catalysed reaction is uridine(38/39/40) in tRNA = pseudouridine(38/39/40) in tRNA. In terms of biological role, formation of pseudouridine at positions 38, 39 and 40 in the anticodon stem and loop of transfer RNAs. This Paraburkholderia xenovorans (strain LB400) protein is tRNA pseudouridine synthase A.